The sequence spans 223 residues: Deoxyribose-phosphate aldolase (223 aa).

The active-site Proton donor/acceptor is the Asp-92. The Schiff-base intermediate with acetaldehyde role is filled by Lys-154. Lys-182 serves as the catalytic Proton donor/acceptor.

This sequence belongs to the DeoC/FbaB aldolase family. DeoC type 1 subfamily.

It localises to the cytoplasm. It catalyses the reaction 2-deoxy-D-ribose 5-phosphate = D-glyceraldehyde 3-phosphate + acetaldehyde. It participates in carbohydrate degradation; 2-deoxy-D-ribose 1-phosphate degradation; D-glyceraldehyde 3-phosphate and acetaldehyde from 2-deoxy-alpha-D-ribose 1-phosphate: step 2/2. Catalyzes a reversible aldol reaction between acetaldehyde and D-glyceraldehyde 3-phosphate to generate 2-deoxy-D-ribose 5-phosphate. This Haemophilus influenzae (strain PittEE) protein is Deoxyribose-phosphate aldolase.